The sequence spans 149 residues: UPF0208 membrane protein VFMJ11_0876 (149 aa).

Helical transmembrane passes span 41-61 (FAVK…MVFN) and 69-89 (AIII…WLGN).

It belongs to the UPF0208 family.

The protein resides in the cell inner membrane. The sequence is that of UPF0208 membrane protein VFMJ11_0876 from Aliivibrio fischeri (strain MJ11) (Vibrio fischeri).